Here is a 622-residue protein sequence, read N- to C-terminus: Cilia- and flagella-associated protein 206 (622 aa).

The protein belongs to the CFAP206 family.

The protein resides in the cytoplasm. It is found in the cytoskeleton. Its subcellular location is the cilium axoneme. The protein localises to the cilium basal body. Functionally, essential for sperm motility and is involved in the regulation of the beating frequency of motile cilia on the epithelial cells of the respiratory tract. Required for the establishment of radial spokes in sperm flagella. The polypeptide is Cilia- and flagella-associated protein 206 (Bos taurus (Bovine)).